The chain runs to 255 residues: Zinc D-Ala-D-Ala carboxypeptidase (255 aa).

A signal peptide spans 1-42 (MRPRPIRLLLTALVGAGLAFAPVSAVAAPTATASASADVGAL). Asp-43 carries the blocked amino end (Asp) modification. Intrachain disulfides connect Cys-45–Cys-123 and Cys-136–Cys-184. Arg-180 lines the substrate pocket. Position 196 (His-196) interacts with Zn(2+). Cysteines 212 and 253 form a disulfide. The Proton donor role is filled by His-234. His-237 and His-239 together coordinate Zn(2+).

This sequence belongs to the peptidase M15 family. The cofactor is Zn(2+). The N-terminus is partially blocked as a result of the cyclization of the first two amino acids into anhydroaspartylglycine imide.

The protein resides in the secreted. It catalyses the reaction Cleavage of the bond: (Ac)2-L-lysyl-D-alanyl-|-D-alanine.. Its function is as follows. This enzyme catalyzes carboxypeptidation and transpeptidation reactions involved in bacterial cell wall metabolism. It effectively catalyzes the transfer of the N-alpha, N-epsilon-diacetyl-L-lysyl-D-alanyl electrophilic group of the standard tripeptide substrate N-alpha,N-epsilon-diacetyl-L-lysyl-D-alanyl-D-alanine to water. It also performs a weak beta-lactamase activity, hydrolyzing penicillin into penicilloate at a very low rate. The sequence is that of Zinc D-Ala-D-Ala carboxypeptidase from Streptomyces albus G.